The sequence spans 289 residues: Orotidine 5'-phosphate decarboxylase (289 aa).

Lysine 97 (proton donor) is an active-site residue.

It belongs to the OMP decarboxylase family. Type 2 subfamily.

It catalyses the reaction orotidine 5'-phosphate + H(+) = UMP + CO2. It functions in the pathway pyrimidine metabolism; UMP biosynthesis via de novo pathway; UMP from orotate: step 2/2. The chain is Orotidine 5'-phosphate decarboxylase from Petrotoga mobilis (strain DSM 10674 / SJ95).